Reading from the N-terminus, the 527-residue chain is Peptide chain release factor 3 (527 aa).

Positions 9–277 (AKRRTFAIIS…AVVDWAPRPL (269 aa)) constitute a tr-type G domain. GTP contacts are provided by residues 18-25 (SHPDAGKT), 86-90 (DTPGH), and 140-143 (NKLD).

Belongs to the TRAFAC class translation factor GTPase superfamily. Classic translation factor GTPase family. PrfC subfamily.

Its subcellular location is the cytoplasm. Functionally, increases the formation of ribosomal termination complexes and stimulates activities of RF-1 and RF-2. It binds guanine nucleotides and has strong preference for UGA stop codons. It may interact directly with the ribosome. The stimulation of RF-1 and RF-2 is significantly reduced by GTP and GDP, but not by GMP. The protein is Peptide chain release factor 3 of Ectopseudomonas mendocina (strain ymp) (Pseudomonas mendocina).